Here is a 628-residue protein sequence, read N- to C-terminus: Biosynthetic arginine decarboxylase (628 aa).

Position 101 is an N6-(pyridoxal phosphate)lysine (Lys101). 281–291 (VDVGGGLGVDY) lines the substrate pocket.

It belongs to the Orn/Lys/Arg decarboxylase class-II family. SpeA subfamily. The cofactor is Mg(2+). Pyridoxal 5'-phosphate serves as cofactor.

It carries out the reaction L-arginine + H(+) = agmatine + CO2. It participates in amine and polyamine biosynthesis; agmatine biosynthesis; agmatine from L-arginine: step 1/1. Its function is as follows. Catalyzes the biosynthesis of agmatine from arginine. This chain is Biosynthetic arginine decarboxylase, found in Alkalilimnicola ehrlichii (strain ATCC BAA-1101 / DSM 17681 / MLHE-1).